A 331-amino-acid polypeptide reads, in one-letter code: Ketol-acid reductoisomerase (NADP(+)) (331 aa).

Positions 2 to 182 constitute a KARI N-terminal Rossmann domain; that stretch reads AQLFYDSDAD…GGTRAGILET (181 aa). Residues 25-28, serine 51, serine 53, and 83-86 each bind NADP(+); these read YGSQ and DEFQ. Histidine 108 is a catalytic residue. NADP(+) is bound at residue glycine 134. The region spanning 183 to 328 is the KARI C-terminal knotted domain; the sequence is NFKEETETDL…KGLRSMFSWL (146 aa). Residues aspartate 191, glutamate 195, glutamate 227, and glutamate 231 each coordinate Mg(2+). Substrate is bound at residue serine 252.

This sequence belongs to the ketol-acid reductoisomerase family. Mg(2+) is required as a cofactor.

It catalyses the reaction (2R)-2,3-dihydroxy-3-methylbutanoate + NADP(+) = (2S)-2-acetolactate + NADPH + H(+). The catalysed reaction is (2R,3R)-2,3-dihydroxy-3-methylpentanoate + NADP(+) = (S)-2-ethyl-2-hydroxy-3-oxobutanoate + NADPH + H(+). Its pathway is amino-acid biosynthesis; L-isoleucine biosynthesis; L-isoleucine from 2-oxobutanoate: step 2/4. It participates in amino-acid biosynthesis; L-valine biosynthesis; L-valine from pyruvate: step 2/4. Involved in the biosynthesis of branched-chain amino acids (BCAA). Catalyzes an alkyl-migration followed by a ketol-acid reduction of (S)-2-acetolactate (S2AL) to yield (R)-2,3-dihydroxy-isovalerate. In the isomerase reaction, S2AL is rearranged via a Mg-dependent methyl migration to produce 3-hydroxy-3-methyl-2-ketobutyrate (HMKB). In the reductase reaction, this 2-ketoacid undergoes a metal-dependent reduction by NADPH to yield (R)-2,3-dihydroxy-isovalerate. The sequence is that of Ketol-acid reductoisomerase (NADP(+)) from Synechococcus sp. (strain CC9902).